The chain runs to 743 residues: MDGPNFAHQGGRSQRTTELYSCARCRKLKKKCGKQIPTCANCDKNGAHCSYPGRAPRRTKKELADAMLRGEYVPVKRNKKVGKSPLSTKSMPNSSSPLSANGAITPGFSPYENDDAHKMKQLKPSDPINLVMGASPNSSEGVSSLISVLTSLNDNSNPSSHLSSNENSMIPSRSLPASVQQSSTTSSFGGYNTPSPLISSHVPANAQAVPLQNNNRNTSNGDNGSNVNHDNNNGSTNTPQLSLTPYANNSAPNGKFDSVPVDASSIEFETMSCCFKGGRTTSWVREDGSFKSIDRSLLDRFIAAYFKHNHRLFPMIDKIAFLNDAATITDFERLYDNKNYPDSFVFKVYMIMAIGCTTLQRAGMVSQDEECLSEHLAFLAMKKFRSVIILQDIETVRCLLLLGIYSFFEPKGSSSWTISGIIMRLTIGLGLNRELTAKKLKSMSALEAEARYRVFWSAYCFERLVCTSLGRISGIDDEDITVPLPRALYVDERDDLEMTKLMISLRKMGGRIYKQVHSVSAGRQKLTIEQKQEIISGLRKELDEIYSRESERRKLKKSQMDQVERENNSTTNVISFHSSEIWLAMRYSQLQILLYRPSALMPKPPIDSLSTLGEFCLQAWKHTYTLYKKRLLPLNWITLFRTLTICNTILYCLCQWSIDLIESKIEIQQCVEILRHFGERWIFAMRCADVFQNISNTILDISLSHGKVPNMDQLTRELFGASDSYQDILDENNVDVSWVDKLV.

Positions 22 to 49 (CARCRKLKKKCGKQIPTCANCDKNGAHC) form a DNA-binding region, zn(2)-C6 fungal-type. Disordered stretches follow at residues 81–100 (VGKSPLSTKSMPNSSSPLSA) and 155–249 (NSNP…YANN). Composition is skewed to polar residues over residues 85–99 (PLSTKSMPNSSSPLS) and 155–198 (NSNP…SPLI). Positions 213–238 (NNNRNTSNGDNGSNVNHDNNNGSTNT) are enriched in low complexity. Over residues 239–249 (PQLSLTPYANN) the composition is skewed to polar residues.

Its subcellular location is the nucleus. Functionally, binds to SIN3. This is Protein STB5 (STB5) from Saccharomyces cerevisiae (strain ATCC 204508 / S288c) (Baker's yeast).